Reading from the N-terminus, the 796-residue chain is Protein tyrosine phosphatase domain-containing protein 1 (796 aa).

The Tyrosine-protein phosphatase domain maps to 126–297 (YSSWVTDNIL…LIPLRNIFSC (172 aa)). The active-site Phosphocysteine intermediate is the cysteine 234. Phosphoserine is present on residues serine 435 and serine 437.

Belongs to the protein-tyrosine phosphatase family. Non-receptor class PTPDC1 subfamily.

In terms of biological role, may play roles in cilia formation and/or maintenance. The sequence is that of Protein tyrosine phosphatase domain-containing protein 1 (PTPDC1) from Bos taurus (Bovine).